We begin with the raw amino-acid sequence, 446 residues long: Adenylosuccinate synthetase (446 aa).

GTP contacts are provided by residues Gly20–Lys26 and Gly48–Thr50. Catalysis depends on Asp21, which acts as the Proton acceptor. Positions 21 and 48 each coordinate Mg(2+). IMP-binding positions include Asp21–Lys24, Asn46–His49, Thr137, Arg151, Gln232, Thr247, and Arg319. His49 serves as the catalytic Proton donor. Position 315–321 (Ser315–Arg321) interacts with substrate. GTP contacts are provided by residues Arg321, Lys347–Asp349, and Ser429–Gly431.

This sequence belongs to the adenylosuccinate synthetase family. As to quaternary structure, homodimer. Mg(2+) is required as a cofactor.

Its subcellular location is the cytoplasm. It catalyses the reaction IMP + L-aspartate + GTP = N(6)-(1,2-dicarboxyethyl)-AMP + GDP + phosphate + 2 H(+). The protein operates within purine metabolism; AMP biosynthesis via de novo pathway; AMP from IMP: step 1/2. In terms of biological role, plays an important role in the de novo pathway of purine nucleotide biosynthesis. Catalyzes the first committed step in the biosynthesis of AMP from IMP. In Ralstonia nicotianae (strain ATCC BAA-1114 / GMI1000) (Ralstonia solanacearum), this protein is Adenylosuccinate synthetase.